Reading from the N-terminus, the 330-residue chain is Flotillin-like protein FloA (330 aa).

2 consecutive transmembrane segments (helical) span residues 5–25 (FLPL…FYYV) and 27–47 (FLLW…QLFL).

This sequence belongs to the flotillin-like FloA family. In terms of assembly, homooligomerizes.

The protein localises to the cell membrane. It localises to the membrane raft. Its function is as follows. Found in functional membrane microdomains (FMM) that may be equivalent to eukaryotic membrane rafts. FMMs are highly dynamic and increase in number as cells age. Flotillins are thought to be important factors in membrane fluidity. This Parabacteroides distasonis (strain ATCC 8503 / DSM 20701 / CIP 104284 / JCM 5825 / NCTC 11152) protein is Flotillin-like protein FloA.